A 251-amino-acid chain; its full sequence is Putative integrase/recombinase y4eF (251 aa).

The Core-binding (CB) domain occupies 1–40 (MLGREDIRTYQVYLANEKKLAPGSIHIALSALRFFFNVTL). The Tyr recombinase domain maps to 58-231 (KLPIILSPDE…ATNKVCATES (174 aa)). Catalysis depends on residues arginine 93, lysine 118, histidine 183, arginine 186, and histidine 209. Residue tyrosine 218 is the O-(3'-phospho-DNA)-tyrosine intermediate of the active site.

It belongs to the 'phage' integrase family.

The protein is Putative integrase/recombinase y4eF of Sinorhizobium fredii (strain NBRC 101917 / NGR234).